An 81-amino-acid polypeptide reads, in one-letter code: Cortexin-2 (81 aa).

A helical transmembrane segment spans residues 29–49; that stretch reads TGFAFVGILCIFLGLLIIRCF.

The protein belongs to the cortexin family.

Its subcellular location is the membrane. The polypeptide is Cortexin-2 (CTXN2) (Homo sapiens (Human)).